A 215-amino-acid polypeptide reads, in one-letter code: Transcription elongation factor A protein-like 4 (215 aa).

Residue M1 is modified to N-acetylmethionine. Positions 1–133 are disordered; that stretch reads MEKLYSENEG…RKAKRKTNKG (133 aa). Phosphoserine occurs at positions 6, 88, and 102. A compositionally biased stretch (basic and acidic residues) spans 25–102; the sequence is QDERKPEVTC…KPEIEGKPES (78 aa).

It belongs to the TFS-II family. TFA subfamily.

Its subcellular location is the nucleus. May be involved in transcriptional regulation. This is Transcription elongation factor A protein-like 4 (TCEAL4) from Homo sapiens (Human).